Consider the following 682-residue polypeptide: Acetyl-coenzyme A synthetase 2-like, mitochondrial (682 aa).

The transit peptide at Met1–Leu38 directs the protein to the mitochondrion. Residues Arg217–Arg220 and Thr334 contribute to the CoA site. Lys389 bears the N6-acetyllysine mark. Residues Gly410 to Pro412, Asp434 to Thr439, Asp526, and Arg541 contribute to the ATP site. Position 549 (Ser549) interacts with CoA. Arg552 is a binding site for ATP. Residue Lys635 is modified to N6-acetyllysine.

It belongs to the ATP-dependent AMP-binding enzyme family. In terms of assembly, interacts with SIRT3. Reversibly acetylated at Lys-635. The acetyl-CoA synthase activity is inhibited by acetylation and activated by deacetylation mediated by the deacetylase SIRT3. In terms of tissue distribution, highly expressed in heart, testis, kidney, skeletal muscle, lung and spleen. Detected at low levels in brain.

Its subcellular location is the mitochondrion matrix. It carries out the reaction acetate + ATP + CoA = acetyl-CoA + AMP + diphosphate. It catalyses the reaction propanoate + ATP + CoA = propanoyl-CoA + AMP + diphosphate. Its activity is regulated as follows. Inhibited by acetylation at Lys-635 and activated by deacetylation mediated by the deacetylase SIRT3. Its function is as follows. Catalyzes the synthesis of acetyl-CoA from short-chain fatty acids. Acetate is the preferred substrate. Can also utilize propionate with a much lower affinity. Provides acetyl-CoA that is utilized mainly for oxidation under ketogenic conditions. Involved in thermogenesis under ketogenic conditions, using acetate as a vital fuel when carbohydrate availability is insufficient. The polypeptide is Acetyl-coenzyme A synthetase 2-like, mitochondrial (Acss1) (Mus musculus (Mouse)).